The primary structure comprises 164 residues: MSIQGQIALALMVNMAVGSVDASQEVMKNLSLNFGKALDECKKEMTLTDAINEDFYNFWKEGYEIKNRETGCAIMCLSTKLNMLDPEGNLHHGNAMEFAKKHGADETMAQQLIDIVHGCEKSTPANDDKCIWTLGVATCFKAEIHKLNWAPSMDVAVGEILAEV.

The signal sequence occupies residues 1–22; the sequence is MSIQGQIALALMVNMAVGSVDA. 3 disulfides stabilise this stretch: Cys-41–Cys-76, Cys-72–Cys-130, and Cys-119–Cys-139.

It belongs to the PBP/GOBP family. In terms of assembly, homodimer. Antenna.

Functionally, this major soluble protein in olfactory sensilla of male moths serves to solubilize the extremely hydrophobic pheromone molecules such as bombykol and to transport pheromone through the aqueous lymph to receptors located on olfactory cilia. The polypeptide is Pheromone-binding protein (Bombyx mori (Silk moth)).